Reading from the N-terminus, the 350-residue chain is MFEISLSDPVELRDADDAALLAAIEDCARAEVAAGARRLSAIAELTSRRTGNDQRADWACDGWDCAAAEVAAALTVSHRKASGQMHLSLTLNRLPQVAALFLAGQLSARLVSIIAWRTYLVRDPEALSLLDAALAKHATAWGPLSAPKLEKAIDSWIDRYDPAALRRTRISARSRDLCIGDPDEDAGTAALWGRLFATDAAMLDKRLTQLAHGVCDDDPRTIAQRRADALGALAAGADRLTCGCGNSDCPSSAGNHRQATGVVIHVVADAAALGAAPDPRLSGPEPALAPEAPATPAVKPPAALISGGGVVPAPLLAELIRGGAALSRVRHPGDLRSEPHYRPSAKLAEF.

A disordered region spans residues arginine 330–phenylalanine 350. The span at histidine 331 to tyrosine 341 shows a compositional bias: basic and acidic residues.

This is an uncharacterized protein from Mycobacterium tuberculosis.